We begin with the raw amino-acid sequence, 72 residues long: UPF0270 protein ESA_04379 (72 aa).

The protein belongs to the UPF0270 family.

In Cronobacter sakazakii (strain ATCC BAA-894) (Enterobacter sakazakii), this protein is UPF0270 protein ESA_04379.